Reading from the N-terminus, the 205-residue chain is Glycerol-3-phosphate acyltransferase (205 aa).

5 consecutive transmembrane segments (helical) span residues 4-24 (IAPGMILFAYLCGSISSAILV), 56-76 (VAVLIFDVLKGMLPVWGAYAL), 81-101 (FWLGLIAIAACLGHIWPVFFG), 112-132 (FGAIAPIGWDLTGVMAGTWLL), and 138-158 (GYSSLGAIVSALIAPFYVWWF).

The protein belongs to the PlsY family. In terms of assembly, probably interacts with PlsX.

The protein localises to the cell inner membrane. It catalyses the reaction an acyl phosphate + sn-glycerol 3-phosphate = a 1-acyl-sn-glycero-3-phosphate + phosphate. The protein operates within lipid metabolism; phospholipid metabolism. In terms of biological role, catalyzes the transfer of an acyl group from acyl-phosphate (acyl-PO(4)) to glycerol-3-phosphate (G3P) to form lysophosphatidic acid (LPA). This enzyme utilizes acyl-phosphate as fatty acyl donor, but not acyl-CoA or acyl-ACP. This Citrobacter koseri (strain ATCC BAA-895 / CDC 4225-83 / SGSC4696) protein is Glycerol-3-phosphate acyltransferase.